The following is a 130-amino-acid chain: Small ribosomal subunit protein uS11c (130 aa).

The protein belongs to the universal ribosomal protein uS11 family. In terms of assembly, part of the 30S ribosomal subunit.

The protein localises to the plastid. It is found in the chloroplast. In Anthoceros angustus (Hornwort), this protein is Small ribosomal subunit protein uS11c.